The primary structure comprises 469 residues: ATP synthase subunit beta (469 aa).

156-163 is a binding site for ATP; that stretch reads GGAGVGKT.

This sequence belongs to the ATPase alpha/beta chains family. As to quaternary structure, F-type ATPases have 2 components, CF(1) - the catalytic core - and CF(0) - the membrane proton channel. CF(1) has five subunits: alpha(3), beta(3), gamma(1), delta(1), epsilon(1). CF(0) has three main subunits: a(1), b(2) and c(9-12). The alpha and beta chains form an alternating ring which encloses part of the gamma chain. CF(1) is attached to CF(0) by a central stalk formed by the gamma and epsilon chains, while a peripheral stalk is formed by the delta and b chains.

Its subcellular location is the cell membrane. It carries out the reaction ATP + H2O + 4 H(+)(in) = ADP + phosphate + 5 H(+)(out). Produces ATP from ADP in the presence of a proton gradient across the membrane. The catalytic sites are hosted primarily by the beta subunits. In Lactococcus lactis subsp. cremoris (strain MG1363), this protein is ATP synthase subunit beta.